The primary structure comprises 260 residues: Phosphatidate cytidylyltransferase (260 aa).

The next 7 helical transmembrane spans lie at 9 to 29 (IIALLIFLPILLMGGTTLMLF), 46 to 66 (MIKLISVPGIFSALALIIIML), 70 to 90 (AGDWVSNIQLKSLIAMSFILL), 102 to 122 (FMDAAFCLMSVAYVGIGFMYF), 130 to 150 (LHYILYAFLVVWLTDTGAYIF), 172 to 192 (FIGGLICSLIVPIVMLFFVDF), and 196 to 216 (IWLLLLVTIILSIFGQLGDLV).

It belongs to the CDS family.

The protein resides in the cell membrane. It carries out the reaction a 1,2-diacyl-sn-glycero-3-phosphate + CTP + H(+) = a CDP-1,2-diacyl-sn-glycerol + diphosphate. It participates in phospholipid metabolism; CDP-diacylglycerol biosynthesis; CDP-diacylglycerol from sn-glycerol 3-phosphate: step 3/3. This is Phosphatidate cytidylyltransferase (cdsA) from Staphylococcus haemolyticus (strain JCSC1435).